The following is a 452-amino-acid chain: UDP-glycosyltransferase 76D1 (452 aa).

Residues Ser-269, 329–331 (APQ), 346–354 (HGGWNSCLE), and 368–371 (SGDQ) each bind UDP-alpha-D-glucose.

Belongs to the UDP-glycosyltransferase family.

Functionally, possesses low quercetin 7-O-glucosyltransferase activity in vitro. This Arabidopsis thaliana (Mouse-ear cress) protein is UDP-glycosyltransferase 76D1 (UGT76D1).